A 437-amino-acid polypeptide reads, in one-letter code: UDP-N-acetylmuramate--L-alanine ligase (437 aa).

114-120 (GTHGKTS) provides a ligand contact to ATP.

The protein belongs to the MurCDEF family.

The protein resides in the cytoplasm. It carries out the reaction UDP-N-acetyl-alpha-D-muramate + L-alanine + ATP = UDP-N-acetyl-alpha-D-muramoyl-L-alanine + ADP + phosphate + H(+). It functions in the pathway cell wall biogenesis; peptidoglycan biosynthesis. Functionally, cell wall formation. The sequence is that of UDP-N-acetylmuramate--L-alanine ligase from Lactobacillus johnsonii (strain CNCM I-12250 / La1 / NCC 533).